Reading from the N-terminus, the 196-residue chain is Ribonuclease HII (196 aa).

Residues 9-196 (KLVAGVDEVG…KPVRHALGIE (188 aa)) enclose the RNase H type-2 domain. Residues aspartate 15, glutamate 16, and aspartate 107 each coordinate a divalent metal cation.

This sequence belongs to the RNase HII family. Mn(2+) serves as cofactor. Requires Mg(2+) as cofactor.

Its subcellular location is the cytoplasm. It carries out the reaction Endonucleolytic cleavage to 5'-phosphomonoester.. Its function is as follows. Endonuclease that specifically degrades the RNA of RNA-DNA hybrids. The chain is Ribonuclease HII from Aeromonas salmonicida (strain A449).